Consider the following 146-residue polypeptide: Histone H2A.1 (146 aa).

The segment at 118–146 is disordered; sequence SPAAAEKEAKSPKKKTSTKSPKKKVAAKE. Short sequence motifs (SPKK motif) lie at residues 128–131 and 137–140; these read SPKK. A compositionally biased stretch (basic residues) spans 129-146; sequence PKKKTSTKSPKKKVAAKE.

It belongs to the histone H2A family. The nucleosome is a histone octamer containing two molecules each of H2A, H2B, H3 and H4 assembled in one H3-H4 heterotetramer and two H2A-H2B heterodimers. The octamer wraps approximately 147 bp of DNA. In terms of processing, phosphorylated within its C-terminal part, probably at the SPKK motifs. In terms of tissue distribution, expressed preferentially in meristematic tissues of young seedlings, in stigma and ovary but not in pollen.

It is found in the nucleus. The protein resides in the chromosome. Functionally, core component of nucleosome. Nucleosomes wrap and compact DNA into chromatin, limiting DNA accessibility to the cellular machineries which require DNA as a template. Histones thereby play a central role in transcription regulation, DNA repair, DNA replication and chromosomal stability. DNA accessibility is regulated via a complex set of post-translational modifications of histones, also called histone code, and nucleosome remodeling. This is Histone H2A.1 (H2A-9) from Triticum aestivum (Wheat).